The primary structure comprises 619 residues: Dihydroxy-acid dehydratase (619 aa).

Residue Asp81 coordinates Mg(2+). Cys122 serves as a coordination point for [2Fe-2S] cluster. Residues Asp123 and Lys124 each coordinate Mg(2+). The residue at position 124 (Lys124) is an N6-carboxylysine. Cys201 provides a ligand contact to [2Fe-2S] cluster. Glu496 contacts Mg(2+). Ser522 acts as the Proton acceptor in catalysis.

The protein belongs to the IlvD/Edd family. In terms of assembly, homodimer. [2Fe-2S] cluster is required as a cofactor. Mg(2+) serves as cofactor.

It carries out the reaction (2R)-2,3-dihydroxy-3-methylbutanoate = 3-methyl-2-oxobutanoate + H2O. The enzyme catalyses (2R,3R)-2,3-dihydroxy-3-methylpentanoate = (S)-3-methyl-2-oxopentanoate + H2O. The protein operates within amino-acid biosynthesis; L-isoleucine biosynthesis; L-isoleucine from 2-oxobutanoate: step 3/4. It participates in amino-acid biosynthesis; L-valine biosynthesis; L-valine from pyruvate: step 3/4. Its function is as follows. Functions in the biosynthesis of branched-chain amino acids. Catalyzes the dehydration of (2R,3R)-2,3-dihydroxy-3-methylpentanoate (2,3-dihydroxy-3-methylvalerate) into 2-oxo-3-methylpentanoate (2-oxo-3-methylvalerate) and of (2R)-2,3-dihydroxy-3-methylbutanoate (2,3-dihydroxyisovalerate) into 2-oxo-3-methylbutanoate (2-oxoisovalerate), the penultimate precursor to L-isoleucine and L-valine, respectively. The polypeptide is Dihydroxy-acid dehydratase (Paracidovorax citrulli (strain AAC00-1) (Acidovorax citrulli)).